The chain runs to 178 residues: Large ribosomal subunit protein uL5 (178 aa).

The protein belongs to the universal ribosomal protein uL5 family. As to quaternary structure, part of the 50S ribosomal subunit; contacts the 5S rRNA and probably tRNA. Forms a bridge to the 30S subunit in the 70S ribosome.

In terms of biological role, this is one of the proteins that bind and probably mediate the attachment of the 5S RNA into the large ribosomal subunit, where it forms part of the central protuberance. In the 70S ribosome it contacts protein S13 of the 30S subunit (bridge B1b), connecting the 2 subunits; this bridge is implicated in subunit movement. May contact the P site tRNA; the 5S rRNA and some of its associated proteins might help stabilize positioning of ribosome-bound tRNAs. This is Large ribosomal subunit protein uL5 from Archaeoglobus fulgidus (strain ATCC 49558 / DSM 4304 / JCM 9628 / NBRC 100126 / VC-16).